A 164-amino-acid polypeptide reads, in one-letter code: B-phycoerythrin alpha chain (164 aa).

(2R,3E)-phycoerythrobilin contacts are provided by Cys-82 and Cys-139.

The protein belongs to the phycobiliprotein family. In terms of assembly, heteromer of 6 alpha, 6 beta and one gamma chain. Contains two covalently linked bilin chromophores.

It is found in the plastid. It localises to the chloroplast thylakoid membrane. Functionally, light-harvesting photosynthetic bile pigment-protein from the phycobiliprotein complex. This Porphyridium sordidum (Red alga) protein is B-phycoerythrin alpha chain (cpeA).